Consider the following 402-residue polypeptide: Imidazolonepropionase (402 aa).

H69 and H71 together coordinate Fe(3+). Residues H69 and H71 each contribute to the Zn(2+) site. The 4-imidazolone-5-propanoate site is built by R78, Y141, and H174. Y141 is an N-formimidoyl-L-glutamate binding site. H239 is a binding site for Fe(3+). H239 lines the Zn(2+) pocket. Q242 provides a ligand contact to 4-imidazolone-5-propanoate. D314 lines the Fe(3+) pocket. D314 is a Zn(2+) binding site. Positions 316 and 318 each coordinate N-formimidoyl-L-glutamate. T319 lines the 4-imidazolone-5-propanoate pocket.

It belongs to the metallo-dependent hydrolases superfamily. HutI family. The cofactor is Zn(2+). It depends on Fe(3+) as a cofactor.

The protein resides in the cytoplasm. The catalysed reaction is 4-imidazolone-5-propanoate + H2O = N-formimidoyl-L-glutamate. The protein operates within amino-acid degradation; L-histidine degradation into L-glutamate; N-formimidoyl-L-glutamate from L-histidine: step 3/3. Catalyzes the hydrolytic cleavage of the carbon-nitrogen bond in imidazolone-5-propanoate to yield N-formimidoyl-L-glutamate. It is the third step in the universal histidine degradation pathway. This Maricaulis maris (strain MCS10) (Caulobacter maris) protein is Imidazolonepropionase.